The chain runs to 498 residues: Glycerol kinase (498 aa).

Thr-11 is a binding site for ADP. The ATP site is built by Thr-11, Ser-12, and Ser-13. Residue Thr-11 coordinates sn-glycerol 3-phosphate. Arg-15 contributes to the ADP binding site. The sn-glycerol 3-phosphate site is built by Arg-81, Glu-82, Tyr-133, and Asp-242. The glycerol site is built by Arg-81, Glu-82, Tyr-133, Asp-242, and Gln-243. The ADP site is built by Thr-264 and Gly-307. Residues Thr-264, Gly-307, Gln-311, and Gly-412 each contribute to the ATP site. ADP-binding residues include Gly-412 and Asn-416.

This sequence belongs to the FGGY kinase family.

It carries out the reaction glycerol + ATP = sn-glycerol 3-phosphate + ADP + H(+). Its pathway is polyol metabolism; glycerol degradation via glycerol kinase pathway; sn-glycerol 3-phosphate from glycerol: step 1/1. Inhibited by fructose 1,6-bisphosphate (FBP). In terms of biological role, key enzyme in the regulation of glycerol uptake and metabolism. Catalyzes the phosphorylation of glycerol to yield sn-glycerol 3-phosphate. The polypeptide is Glycerol kinase (Acidovorax ebreus (strain TPSY) (Diaphorobacter sp. (strain TPSY))).